We begin with the raw amino-acid sequence, 719 residues long: ATP-dependent RNA helicase SUV3 homolog, mitochondrial (719 aa).

A mitochondrion-targeting transit peptide spans 1–18 (MRRASGVLRVLGGLTQRC). The disordered stretch occupies residues 16–42 (QRCSTSSTPSSSRFPAMNSRRKRNSVR). The Helicase ATP-binding domain maps to 181-319 (EARSVTRKIF…PAAIDIVKKL (139 aa)). Residue 194-201 (GPTNSGKT) participates in ATP binding. The region spanning 343–499 (KAIESYSNIE…PTYDQIETFS (157 aa)) is the Helicase C-terminal domain. The interval 662 to 692 (SKAAGSSKSSEGKRENPSKSEREKPNKRSSI) is disordered. Residues 671-687 (SEGKRENPSKSEREKPN) show a composition bias toward basic and acidic residues. Positions 693–717 (LEALLKRADISEDDLEQLREELNKN) form a coiled coil.

The protein belongs to the helicase family. Requires Mg(2+) as cofactor. It depends on Mn(2+) as a cofactor.

The protein resides in the mitochondrion matrix. It is found in the nucleus. The enzyme catalyses ATP + H2O = ADP + phosphate + H(+). In terms of biological role, ATPase and DNA/RNA helicase able to unwind DNA/DNA, DNA/RNA and RNA/RNA duplexes in the 5'-3' direction. The polypeptide is ATP-dependent RNA helicase SUV3 homolog, mitochondrial (Caenorhabditis elegans).